The following is a 271-amino-acid chain: 4,5-DOPA dioxygenase extradiol (271 aa).

Residues histidine 22, histidine 57, histidine 177, and histidine 234 each coordinate Zn(2+).

This sequence belongs to the DODA-type extradiol aromatic ring-opening dioxygenase family. Monomer. It depends on Zn(2+) as a cofactor.

The protein localises to the cytoplasm. It carries out the reaction L-dopa + O2 = 4-(L-alanin-3-yl)-2-hydroxy-cis,cis-muconate 6-semialdehyde + H(+). In vitro, opens the cyclic ring of dihydroxy-phenylalanine (DOPA) between carbons 4 and 5, thus producing an unstable seco-DOPA that rearranges nonenzymatically to betalamic acid. The physiological substrate is unknown. The chain is 4,5-DOPA dioxygenase extradiol (ygiD) from Escherichia coli (strain K12).